Here is a 485-residue protein sequence, read N- to C-terminus: NADH-quinone oxidoreductase subunit N (485 aa).

14 helical membrane passes run Leu8–Ile28, Phe35–Val55, Gly71–Ala91, Phe105–Leu125, Ala127–Phe147, Tyr159–Ala179, Leu203–Phe223, Pro235–Met255, Val271–Gln291, Leu297–Gln317, Val326–Leu346, Ala373–Ile393, Trp408–Val430, and Ile455–Ile475.

This sequence belongs to the complex I subunit 2 family. In terms of assembly, NDH-1 is composed of 13 different subunits. Subunits NuoA, H, J, K, L, M, N constitute the membrane sector of the complex.

Its subcellular location is the cell inner membrane. It carries out the reaction a quinone + NADH + 5 H(+)(in) = a quinol + NAD(+) + 4 H(+)(out). Its function is as follows. NDH-1 shuttles electrons from NADH, via FMN and iron-sulfur (Fe-S) centers, to quinones in the respiratory chain. The immediate electron acceptor for the enzyme in this species is believed to be ubiquinone. Couples the redox reaction to proton translocation (for every two electrons transferred, four hydrogen ions are translocated across the cytoplasmic membrane), and thus conserves the redox energy in a proton gradient. This chain is NADH-quinone oxidoreductase subunit N, found in Salmonella gallinarum (strain 287/91 / NCTC 13346).